The sequence spans 186 residues: Adenine phosphoribosyltransferase (186 aa).

This sequence belongs to the purine/pyrimidine phosphoribosyltransferase family. In terms of assembly, homodimer.

It is found in the cytoplasm. The enzyme catalyses AMP + diphosphate = 5-phospho-alpha-D-ribose 1-diphosphate + adenine. It functions in the pathway purine metabolism; AMP biosynthesis via salvage pathway; AMP from adenine: step 1/1. In terms of biological role, catalyzes a salvage reaction resulting in the formation of AMP, that is energically less costly than de novo synthesis. The polypeptide is Adenine phosphoribosyltransferase (Xanthomonas campestris pv. campestris (strain B100)).